Consider the following 163-residue polypeptide: SsrA-binding protein (163 aa).

This sequence belongs to the SmpB family.

The protein resides in the cytoplasm. Functionally, required for rescue of stalled ribosomes mediated by trans-translation. Binds to transfer-messenger RNA (tmRNA), required for stable association of tmRNA with ribosomes. tmRNA and SmpB together mimic tRNA shape, replacing the anticodon stem-loop with SmpB. tmRNA is encoded by the ssrA gene; the 2 termini fold to resemble tRNA(Ala) and it encodes a 'tag peptide', a short internal open reading frame. During trans-translation Ala-aminoacylated tmRNA acts like a tRNA, entering the A-site of stalled ribosomes, displacing the stalled mRNA. The ribosome then switches to translate the ORF on the tmRNA; the nascent peptide is terminated with the 'tag peptide' encoded by the tmRNA and targeted for degradation. The ribosome is freed to recommence translation, which seems to be the essential function of trans-translation. This is SsrA-binding protein from Shewanella sp. (strain ANA-3).